The chain runs to 438 residues: Shikimate transporter (438 aa).

12 helical membrane passes run 28-48, 64-84, 109-129, 133-153, 168-188, 193-213, 255-275, 287-307, 318-337, 341-363, 387-407, and 411-431; these read FAGA…AALV, LAAF…GVIF, ALIG…ILLV, AIQG…SVES, VGYG…SMMT, FLSW…LGAL, IIAL…FALN, LFLN…PCFA, VYIT…FMAL, SIFW…VVCV, VASV…ITYF, and WHSV…TALL.

This sequence belongs to the major facilitator superfamily. Metabolite:H+ Symporter (MHS) family (TC 2.A.1.6) family.

The protein localises to the cell inner membrane. The enzyme catalyses shikimate(in) + H(+)(in) = shikimate(out) + H(+)(out). Its function is as follows. Involved in the uptake of shikimate, an intermediate in the aromatic amino acid biosynthetic pathway. This chain is Shikimate transporter, found in Escherichia coli (strain K12).